Consider the following 172-residue polypeptide: Peptide deformylase 1 (172 aa).

Fe cation contacts are provided by Cys91 and His133. Residue Glu134 is part of the active site. His137 serves as a coordination point for Fe cation.

It belongs to the polypeptide deformylase family. The cofactor is Fe(2+).

The enzyme catalyses N-terminal N-formyl-L-methionyl-[peptide] + H2O = N-terminal L-methionyl-[peptide] + formate. Functionally, removes the formyl group from the N-terminal Met of newly synthesized proteins. Requires at least a dipeptide for an efficient rate of reaction. N-terminal L-methionine is a prerequisite for activity but the enzyme has broad specificity at other positions. This chain is Peptide deformylase 1, found in Vibrio parahaemolyticus serotype O3:K6 (strain RIMD 2210633).